A 470-amino-acid chain; its full sequence is Heparan-sulfate 6-O-sulfotransferase 3 (470 aa).

Residues 1–4 lie on the Cytoplasmic side of the membrane; the sequence is MDER. The chain crosses the membrane as a helical; Signal-anchor for type II membrane protein span at residues 5–27; that stretch reads FNKWLLTPVLTLLFVVIMYQYVS. Residues 28–470 lie on the Lumenal side of the membrane; the sequence is PSCTSSCTNF…EDYNSQVVRW (443 aa). The disordered stretch occupies residues 36–121; the sequence is NFGEQLRSGE…EAPENGSLPR (86 aa). A compositionally biased stretch (acidic residues) spans 88-113; the sequence is PEDEDEDPGDPEEEEEEEEEEPDPEA. N-linked (GlcNAc...) asparagine glycans are attached at residues Asn116 and Asn127. 151–159 is a 3'-phosphoadenylyl sulfate binding site; the sequence is HIQKTGGTT. Residues 181–182, Arg198, Trp203, and His208 contribute to the substrate site; that span reads KK. His208 acts as the Proton acceptor in catalysis. Asn230 carries N-linked (GlcNAc...) asparagine glycosylation. Residues Arg244 and Ser252 each contribute to the 3'-phosphoadenylyl sulfate site. Residues His256 and Trp263 each contribute to the substrate site. Residues Asn323 and Asn328 are each glycosylated (N-linked (GlcNAc...) asparagine). A 3'-phosphoadenylyl sulfate-binding site is contributed by 376–378; it reads TQF. N-linked (GlcNAc...) asparagine glycosylation occurs at Asn379. 382–383 serves as a coordination point for 3'-phosphoadenylyl sulfate; it reads RA. The tract at residues 421 to 453 is disordered; it reads TKQLEHQRDRQKRREERRLQREHRAHRWPKEDR. The segment covering 422 to 439 has biased composition (basic and acidic residues); that stretch reads KQLEHQRDRQKRREERRL.

The protein belongs to the sulfotransferase 6 family. As to expression, ubiquitously expressed.

The protein resides in the membrane. The catalysed reaction is alpha-D-glucosaminyl-[heparan sulfate](n) + 3'-phosphoadenylyl sulfate = 6-sulfo-alpha-D-glucosaminyl-[heparan sulfate](n) + adenosine 3',5'-bisphosphate + H(+). In terms of biological role, 6-O-sulfation enzyme which catalyzes the transfer of sulfate from 3'-phosphoadenosine 5'-phosphosulfate (PAPS) to position 6 of the N-sulfoglucosamine residue (GlcNS) of heparan sulfate. The chain is Heparan-sulfate 6-O-sulfotransferase 3 (Hs6st3) from Mus musculus (Mouse).